The chain runs to 378 residues: Glutamate 5-kinase (378 aa).

An ATP-binding site is contributed by Lys17. Substrate contacts are provided by Ser58, Asp145, and Asn157. Residues 177-178 (TD) and 221-227 (TGGMMTK) each bind ATP. One can recognise a PUA domain in the interval 286–364 (VGKLYLDSGA…KEIPTILGYV (79 aa)).

It belongs to the glutamate 5-kinase family.

The protein resides in the cytoplasm. It carries out the reaction L-glutamate + ATP = L-glutamyl 5-phosphate + ADP. It participates in amino-acid biosynthesis; L-proline biosynthesis; L-glutamate 5-semialdehyde from L-glutamate: step 1/2. Functionally, catalyzes the transfer of a phosphate group to glutamate to form L-glutamate 5-phosphate. The chain is Glutamate 5-kinase from Nostoc sp. (strain PCC 7120 / SAG 25.82 / UTEX 2576).